Here is a 261-residue protein sequence, read N- to C-terminus: Small ribosomal subunit protein eS4 (261 aa).

The region spanning 42 to 100 is the S4 RNA-binding domain; that stretch reads LPLILILRNRLKYALTYREVVSILMQRHILVDGKIHFCIRLSDVVSIPKTNENFRLLYD.

Belongs to the eukaryotic ribosomal protein eS4 family.

The protein resides in the cytoplasm. This Prunus armeniaca (Apricot) protein is Small ribosomal subunit protein eS4 (RPS4).